A 1003-amino-acid polypeptide reads, in one-letter code: cGMP-dependent protein kinase (1003 aa).

The tract at residues 1–141 is disordered; that stretch reads MGACSSKAQH…KAIKQQEDTQ (141 aa). Glycine 2 carries the N-myristoyl glycine lipid modification. Cysteine 4 carries the S-palmitoyl cysteine lipid modification. Residues 69 to 85 show a composition bias toward low complexity; that stretch reads EQQQQQQQQQQQQQEQQ. 2 stretches are compositionally biased toward basic and acidic residues: residues 86–109 and 127–141; these read QHPE…ERKP and ERKV…EDTQ. CNMP-binding domain stretches follow at residues 173-289, 292-391, 411-548, and 570-669; these read VCSS…FLAS, FFEM…RVLG, VFAS…ATLG, and IFRY…LQIV. 4 residues coordinate 3',5'-cyclic GMP: glycine 237, glutamate 238, arginine 247, and threonine 248. Residues arginine 625, glycine 634, glutamate 635, alanine 637, arginine 644, and serine 645 each coordinate 3',5'-cyclic GMP. The Protein kinase domain occupies 693–950; the sequence is LNVVRVVGRG…YKDIKEHAFF (258 aa). Residues 699-707 and lysine 722 each bind ATP; that span reads VGRGTFGTV. Catalysis depends on aspartate 816, which acts as the Proton acceptor. Positions 951–1003 constitute an AGC-kinase C-terminal domain; sequence SDFDWDRLAGRDLSPPLLPKGEIYAEDAEEGGLDIEEDEGIELEDEYEWDKDF.

It belongs to the protein kinase superfamily. AGC Ser/Thr protein kinase family. cGMP subfamily. In terms of assembly, monomer. Requires Mg(2+) as cofactor.

Its subcellular location is the cell membrane. It is found in the cytoplasm. It catalyses the reaction L-seryl-[protein] + ATP = O-phospho-L-seryl-[protein] + ADP + H(+). It carries out the reaction L-threonyl-[protein] + ATP = O-phospho-L-threonyl-[protein] + ADP + H(+). Activated by cGMP. The cGMP-binding domains acts cooperatively to activate PKG. Inhibited by the antiparasitic small molecule 4-[2-(4-fluorophenyl)-5-(1-methylpiperidine-4-yl)-1Hpyrrol- 3-yl]pyridine (compound 1). Serine/threonine protein kinase which acts as a downstream effector of the second messenger cGMP. The chain is cGMP-dependent protein kinase from Eimeria tenella (Coccidian parasite).